The primary structure comprises 459 residues: V-type ATP synthase beta chain (459 aa).

Belongs to the ATPase alpha/beta chains family.

Functionally, produces ATP from ADP in the presence of a proton gradient across the membrane. The V-type beta chain is a regulatory subunit. The sequence is that of V-type ATP synthase beta chain from Thermoanaerobacter pseudethanolicus (strain ATCC 33223 / 39E) (Clostridium thermohydrosulfuricum).